Here is a 207-residue protein sequence, read N- to C-terminus: Granulocyte colony-stimulating factor (207 aa).

Residues 1–30 form the signal peptide; the sequence is MAGPATQSPMKLMALQLLLWHSALWTVQEA. 2 cysteine pairs are disulfide-bonded: cysteine 69-cysteine 75 and cysteine 97-cysteine 107. Residue threonine 166 is glycosylated (O-linked (GalNAc...) threonine).

This sequence belongs to the IL-6 superfamily. Monomer. Post-translationally, O-glycan consists of Gal-GalNAc disaccharide which can be modified with up to two sialic acid residues (done in recombinantly expressed G-CSF from CHO cells).

The protein localises to the secreted. Functionally, granulocyte/macrophage colony-stimulating factors are cytokines that act in hematopoiesis by controlling the production, differentiation, and function of 2 related white cell populations of the blood, the granulocytes and the monocytes-macrophages. This CSF induces granulocytes. This Homo sapiens (Human) protein is Granulocyte colony-stimulating factor (CSF3).